We begin with the raw amino-acid sequence, 379 residues long: Structure-specific endonuclease subunit EME2 (379 aa).

The disordered stretch occupies residues 1-55 (MARVGPGRAGVSCQGRGRGRGGSGQRRPPTWEISDSDAEDSAGSEAAARARDPAG). The segment at 50–266 (ARDPAGERRA…YPLKQYRESQ (217 aa)) is nuclease-like domain; forms the post-nick DNA binding interface and is involved in DNA recognition and bending. Residues 288 to 379 (GLQAAWRRQI…NPDLLLDLGS (92 aa)) form a helix-hairpin-helix (2HhH); forms the pre-nick DNA binding interface and is involved in DNA recognition and bending region.

This sequence belongs to the EME1/MMS4 family. As to quaternary structure, part of the heterodimeric MUS81-EME2 complex; the complex forms specifically during the DNA replication phase of the cell cycle.

The protein resides in the nucleus. Functionally, non-catalytic subunit of the structure-specific, heterodimeric DNA endonuclease MUS81-EME2 which is involved in the maintenance of genome stability. In the complex, EME2 is required for DNA cleavage, participating in DNA recognition and bending. MUS81-EME2 cleaves 3'-flaps and nicked Holliday junctions, and exhibit limited endonuclease activity with 5' flaps and nicked double-stranded DNAs. MUS81-EME2 which is active during the replication of DNA is more specifically involved in replication fork processing. Replication forks frequently encounter obstacles to their passage, including DNA base lesions, DNA interstrand cross-links, difficult-to-replicate sequences, transcription bubbles, or tightly bound proteins. One mechanism for the restart of a stalled replication fork involves nucleolytic cleavage mediated by the MUS81-EME2 endonuclease. By acting upon the stalled fork, MUS81-EME2 generates a DNA double-strand break (DSB) that can be repaired by homologous recombination, leading to the restoration of an active fork. MUS81-EME2 could also function in telomere maintenance. The protein is Structure-specific endonuclease subunit EME2 of Homo sapiens (Human).